A 519-amino-acid chain; its full sequence is Seed lectin (519 aa).

Cystine bridges form between cysteine 249/cysteine 258 and cysteine 274/cysteine 293. Ricin B-type lectin domains follow at residues 261-387 and 390-518; these read ETRT…WRVG and VQPI…WVLF. The 1-alpha repeat unit spans residues 271–311; the sequence is DALCVDVAGALTSDGSRLILYPCGQQVNQKWTFHSDGTVRS. A carbohydrate-binding positions include 276-279 and 296-298; these read DVAG and QVN. The 1-beta repeat unit spans residues 312–352; the sequence is LGKCLATNNSKFGNLVVIYDCSKLAAEDISWDVSVGGTIMN. Cysteine 315 and cysteine 332 are joined by a disulfide. A 1-gamma repeat occupies 356–388; sequence EDLALTSNKATRSTNLTMEVNTYSASQGWRVGN. Residue asparagine 370 is glycosylated (N-linked (GlcNAc...) asparagine). The 2-alpha repeat unit spans residues 401–438; the sequence is DDMCLEATDGNTNMWLEECVPNQREQSWALYSDGTIRV. 2 cysteine pairs are disulfide-bonded: cysteine 404–cysteine 419 and cysteine 445–cysteine 464. A 2-beta repeat occupies 442–482; that stretch reads RELCVTASSSTYDNWKVITILNCDGSNNQRWVFLADGSIST. A carbohydrate contacts are provided by residues aspartate 454, 491–494, 505–508, and asparagine 512; these read DVAR and HRPH. Residues 486 to 513 form a 2-gamma repeat; the sequence is QRLAMDVARSDVDLKKIILHRPHGDLNQ.

The protein in the N-terminal section; belongs to the ribosome-inactivating protein family. Type 2 RIP subfamily. Heterotrimer consisting of Aalpha, Abeta and B chains with Abeta and B being disulfide-linked.

Functionally, seed lectin similar to type 2 ribosome-inactivating proteins. The Aalpha and Abeta chains constitute the rRNA glycosidase domain and the B chain the carbohydrate-binding lectin domain. Is predicted to have no glycosidase activity and, hence, to be non-toxic, due to small changes in both the nucleotide binding and carbohydrate binding capabilities. Binds galactose and derivatives with a preference for the beta-anomeric forms. Binds prophyrins. Has hemagglutinating activity towards rabbit and human erythrocytes. This Trichosanthes anguina (Snake gourd) protein is Seed lectin.